The following is a 369-amino-acid chain: Anhydro-N-acetylmuramic acid kinase (369 aa).

12–19 (GTSLDGVD) contacts ATP.

Belongs to the anhydro-N-acetylmuramic acid kinase family.

It carries out the reaction 1,6-anhydro-N-acetyl-beta-muramate + ATP + H2O = N-acetyl-D-muramate 6-phosphate + ADP + H(+). Its pathway is amino-sugar metabolism; 1,6-anhydro-N-acetylmuramate degradation. It functions in the pathway cell wall biogenesis; peptidoglycan recycling. In terms of biological role, catalyzes the specific phosphorylation of 1,6-anhydro-N-acetylmuramic acid (anhMurNAc) with the simultaneous cleavage of the 1,6-anhydro ring, generating MurNAc-6-P. Is required for the utilization of anhMurNAc either imported from the medium or derived from its own cell wall murein, and thus plays a role in cell wall recycling. In Escherichia coli O1:K1 / APEC, this protein is Anhydro-N-acetylmuramic acid kinase.